A 303-amino-acid polypeptide reads, in one-letter code: Methyltransferase ktnA (303 aa).

It belongs to the class I-like SAM-binding methyltransferase superfamily. Requires S-adenosyl-L-methionine as cofactor.

In terms of biological role, non-reducing polyketide synthase; part of the gene cluster that mediates the biosynthesis of the bicoumarin kotanin. The non-reducing polyketide synthase ktnS first catalyzes the formation of the pentaketidic 4,7-dihydroxy-5-methylcoumarin from acetyl coenzyme A and 4 malonyl coenzyme A molecules. Further O-methylation by ktnB leads to the formation of 7-demethylsiderin. Then, an oxidative phenol coupling catalyzed by the cytochrome P450 monooxygenase ktnC forms the 8,8'-dimer P-orlandin via dimerization the monomeric precursor, 7-demethylsiderin. P-orlandin is subsequently O-methylated in a stepwise fashion to demethylkotanin and kotanin. The function of ktnA within the pathway has not been determined yet. This chain is Methyltransferase ktnA, found in Aspergillus niger (strain ATCC MYA-4892 / CBS 513.88 / FGSC A1513).